Reading from the N-terminus, the 581-residue chain is MAASGRGLSRALHSTPCPAWKRVQSGANGCLKPEYDAVVIGAGHNGLVAAAYLQRLGVNTAVFERRHVIGGAAVTEEIIPGFKFSRASYLLSLLRPQIYTDLELKKHGLKLHLRNPYSFTPMLEEGTLSKPPRSLLLGTDVAENQKQISQFSRKDAQAFPRYEEFMKRLVLAIDPLLDAAPVDIAALQHGSLLQRLRALSTLRPLLKAGRTLGAQLPQYYEVLTAPISKVLDQWFESEPLKATLATDAVIGAMTSPHTPGSGYVLLHHVMGSLEGMQGAWSYVQGGMGALSDAIASSATAHGASIFTEKTVAKVQVNSEGRVQGVVLQGGEEVRSRVVLSCASPQVTFLELTPQEWLPGAFVKRISQLDTQSPVTKINVAVDRLPNFQAAPNAPGDQPQAHHQCSIHLNCEDTLLLHQAFEDAKGGLPSQRPMIELCIPSSLDPTLAPTGCHVVSLFTQYTPYTLAGGKVWDEQKKNTYADKVFDCIEAYAPGFKRSVLGRDILTPQDLERIFGLPGGNIFHGAMSLDQLYFARPVPQHSDYRCPVQGLYLCGSGAHPGGGVMGAAGRNAAHIVFRDLKNM.

38-71 (VVIGAGHNGLVAAAYLQRLGVNTAVFERRHVIGG) contributes to the FAD binding site.

This sequence belongs to the carotenoid/retinoid oxidoreductase family. Interacts with COX5B; this interaction may contribute to localize PYROXD2 to the inner face of the inner mitochondrial membrane.

Its subcellular location is the mitochondrion matrix. Probable oxidoreductase that may play a role as regulator of mitochondrial function. The chain is Pyridine nucleotide-disulfide oxidoreductase domain-containing protein 2 from Rattus norvegicus (Rat).